Consider the following 248-residue polypeptide: Probable transcriptional regulatory protein Mnod_7401 (248 aa).

This sequence belongs to the TACO1 family.

It localises to the cytoplasm. This is Probable transcriptional regulatory protein Mnod_7401 from Methylobacterium nodulans (strain LMG 21967 / CNCM I-2342 / ORS 2060).